We begin with the raw amino-acid sequence, 463 residues long: Abscisic acid 8'-hydroxylase 3 (463 aa).

Residues 6-26 (LFLTLSAAALFLCLLRFIAGV) form a helical membrane-spanning segment. Cys-411 contributes to the heme binding site.

This sequence belongs to the cytochrome P450 family. Requires heme as cofactor. As to expression, mainly expressed in flower buds, flowers, rosette leaves and roots. Lower expression in mature siliques and inflorescence stems. Not expressed in dry seeds.

The protein resides in the membrane. The enzyme catalyses 2-cis-(+)-abscisate + reduced [NADPH--hemoprotein reductase] + O2 = (+)-8'-hydroxyabscisate + oxidized [NADPH--hemoprotein reductase] + H2O + H(+). It participates in plant hormone degradation; abscisic acid degradation. Inhibited by tetcyclcis, but not by metyrapone. Its function is as follows. Involved in the oxidative degradation of abscisic acid, but not in the isomerization of the produced 8'-hydroxyabscisic acid (8'-OH-ABA) to (-)-phaseic acid (PA). Involved in the control of postgermination growth. The protein is Abscisic acid 8'-hydroxylase 3 (CYP707A3) of Arabidopsis thaliana (Mouse-ear cress).